The sequence spans 66 residues: Large ribosomal subunit protein bL35 (66 aa).

The disordered stretch occupies residues 1 to 26 (MPKQKTHRGAAKRFKKTGSGKLKRSH).

This sequence belongs to the bacterial ribosomal protein bL35 family.

This chain is Large ribosomal subunit protein bL35, found in Bacillus anthracis.